Consider the following 798-residue polypeptide: Probable G-protein coupled receptor 156 (798 aa).

Residues Met1–Leu49 are Extracellular-facing. N-linked (GlcNAc...) asparagine glycosylation occurs at Asn6. The chain crosses the membrane as a helical span at residues Leu50–Phe70. Residues Thr71–Asn86 are Cytoplasmic-facing. Residues Leu87–Ile107 form a helical membrane-spanning segment. Topologically, residues Gln108–Ala118 are extracellular. The chain crosses the membrane as a helical span at residues Leu119–Leu139. Residues Gly140–Gln164 lie on the Cytoplasmic side of the membrane. Residues Leu165–Leu185 traverse the membrane as a helical segment. The Extracellular portion of the chain corresponds to Thr186–Asp222. The chain crosses the membrane as a helical span at residues Val223–Ala243. Residues Gly244–Ser257 lie on the Cytoplasmic side of the membrane. A helical transmembrane segment spans residues Leu258–Thr278. At Arg279–Val288 the chain is on the extracellular side. Residues Phe289–Ile309 form a helical membrane-spanning segment. At Pro310–Val798 the chain is on the cytoplasmic side. Positions Asp353–Glu390 form a coiled coil. Disordered stretches follow at residues His441 to Pro497, Ser546 to Glu666, and Pro693 to Ser715. Residues Pro479–Gln492 show a composition bias toward basic and acidic residues. Residues Leu559–Ser572 are compositionally biased toward polar residues. Positions Val583–Ser594 are enriched in basic residues. A compositionally biased stretch (polar residues) spans His606–Arg624. The span at Pro639 to Pro648 shows a compositional bias: low complexity.

Belongs to the G-protein coupled receptor 3 family. GABA-B receptor subfamily. Expressed in the outer and inner hair cells of the organ of Corti (at protein level). Expressed in the utricle and saccule within the vestibule (at protein level).

It localises to the cell membrane. The protein resides in the postsynaptic cell membrane. Orphan G-protein coupled receptor involved in the regulation of hair cell orientation in mechanosensory organs of the inner ear. It is required to trigger a 180 degree reversal in hair cell orientation, creating a virtual line of polarity reversal (LPR) across which stereociliary bundles are arranged in opposite orientations. In Mus musculus (Mouse), this protein is Probable G-protein coupled receptor 156 (Gpr156).